Here is a 364-residue protein sequence, read N- to C-terminus: Fructose-bisphosphate aldolase B (364 aa).

Ala2 carries the post-translational modification N-acetylalanine. Lys13 carries the N6-succinyllysine modification. Position 36 is a phosphoserine (Ser36). The residue at position 39 (Thr39) is a Phosphothreonine. Arg43 is a beta-D-fructose 1,6-bisphosphate binding site. Phosphothreonine is present on Thr119. Lys121 carries the N6-succinyllysine modification. At Ser132 the chain carries Phosphoserine. The active-site Proton acceptor is Glu188. Residue Lys230 is the Schiff-base intermediate with dihydroxyacetone-P of the active site. Phosphoserine occurs at positions 272, 276, 299, and 301. 272 to 274 (SGG) serves as a coordination point for beta-D-fructose 1,6-bisphosphate. Arg304 is a beta-D-fructose 1,6-bisphosphate binding site. Phosphoserine is present on Ser309. Residue Lys317 is modified to N6-succinyllysine.

It belongs to the class I fructose-bisphosphate aldolase family. In terms of assembly, homotetramer. Interacts with BBS1, BBS2, BBS4 and BBS7. Forms a ternary complex with G6PD and TP53; this interaction is direct.

It is found in the cytoplasm. The protein resides in the cytosol. The protein localises to the cytoskeleton. It localises to the microtubule organizing center. Its subcellular location is the centrosome. It is found in the centriolar satellite. The enzyme catalyses beta-D-fructose 1,6-bisphosphate = D-glyceraldehyde 3-phosphate + dihydroxyacetone phosphate. It carries out the reaction beta-D-fructose 1-phosphate = D-glyceraldehyde + dihydroxyacetone phosphate. It participates in carbohydrate degradation; glycolysis; D-glyceraldehyde 3-phosphate and glycerone phosphate from D-glucose: step 4/4. Its pathway is carbohydrate biosynthesis; gluconeogenesis. The protein operates within carbohydrate metabolism; fructose metabolism. Functionally, catalyzes the aldol cleavage of fructose 1,6-biphosphate to form two triosephosphates dihydroxyacetone phosphate and D-glyceraldehyde 3-phosphate in glycolysis as well as the reverse stereospecific aldol addition reaction in gluconeogenesis. In fructolysis, metabolizes fructose 1-phosphate derived from the phosphorylation of dietary fructose by fructokinase into dihydroxyacetone phosphate and D-glyceraldehyde. Acts as an adapter independently of its enzymatic activity, exerts a tumor suppressor role by stabilizing the ternary complex with G6PD and TP53 to inhibit G6PD activity and keep oxidative pentose phosphate metabolism in check. The sequence is that of Fructose-bisphosphate aldolase B (ALDOB) from Ovis aries (Sheep).